We begin with the raw amino-acid sequence, 441 residues long: Alpha-monoglucosyldiacylglycerol synthase (441 aa).

Belongs to the glycosyltransferase group 1 family. Glycosyltransferase 4 subfamily. The cofactor is Mg(2+).

Its subcellular location is the cell membrane. It carries out the reaction a 1,2-diacyl-sn-glycerol + UDP-alpha-D-glucose = a 1,2-diacyl-3-O-(alpha-D-glucopyranosyl)-sn-glycerol + UDP + H(+). With respect to regulation, activated by the negatively charged lipid phosphatidylglycerol (PG). Glucosyltransferase involved in the biosynthesis of the non-bilayer-prone membrane lipid alpha-monoglucosyldiacylglycerol. This is a major component for maintaining a certain anionic lipid surface charge density, for balancing the bilayer to non-bilayer phase equilibria and for keeping a constant lipid bilayer spontaneous curvature (curvature packing stress). Catalyzes the transfer of a glucosyl residue from UDP-Glc to diacylglycerol (DAG) acceptor to form the corresponding alpha-glucosyl-DAG (1,2-diacyl-3-O-(alpha-D-glucopyranosyl)-sn-glycerol). It can only use UDP-Glc as sugar donor. The protein is Alpha-monoglucosyldiacylglycerol synthase of Streptococcus pneumoniae (strain ATCC BAA-255 / R6).